Reading from the N-terminus, the 570-residue chain is Hydroxylamine reductase (570 aa).

Residues C5, C8, C17, and C23 each contribute to the [4Fe-4S] cluster site. Residues H266, E290, C334, C425, C453, C478, E513, and K515 each coordinate hybrid [4Fe-2O-2S] cluster. C425 carries the post-translational modification Cysteine persulfide.

It belongs to the HCP family. It depends on [4Fe-4S] cluster as a cofactor. Hybrid [4Fe-2O-2S] cluster serves as cofactor.

The protein resides in the cytoplasm. It catalyses the reaction A + NH4(+) + H2O = hydroxylamine + AH2 + H(+). Catalyzes the reduction of hydroxylamine to form NH(3) and H(2)O. The chain is Hydroxylamine reductase from Clostridium botulinum (strain Loch Maree / Type A3).